The chain runs to 460 residues: Ribosomal protein uS12 methylthiotransferase RimO (460 aa).

One can recognise an MTTase N-terminal domain in the interval 16 to 130 (NKIHFISLGC…ILSAIESKEA (115 aa)). Residues Cys-25, Cys-61, Cys-93, Cys-164, Cys-168, and Cys-171 each contribute to the [4Fe-4S] cluster site. The Radical SAM core domain maps to 150-382 (STPKHYAYLK…SQTQKKNVEK (233 aa)). The TRAM domain occupies 385-455 (KQLVGQIVEA…GYDLVGRVIK (71 aa)).

The protein belongs to the methylthiotransferase family. RimO subfamily. It depends on [4Fe-4S] cluster as a cofactor.

It is found in the cytoplasm. The enzyme catalyses L-aspartate(89)-[ribosomal protein uS12]-hydrogen + (sulfur carrier)-SH + AH2 + 2 S-adenosyl-L-methionine = 3-methylsulfanyl-L-aspartate(89)-[ribosomal protein uS12]-hydrogen + (sulfur carrier)-H + 5'-deoxyadenosine + L-methionine + A + S-adenosyl-L-homocysteine + 2 H(+). In terms of biological role, catalyzes the methylthiolation of an aspartic acid residue of ribosomal protein uS12. The chain is Ribosomal protein uS12 methylthiotransferase RimO from Chlamydia caviae (strain ATCC VR-813 / DSM 19441 / 03DC25 / GPIC) (Chlamydophila caviae).